The primary structure comprises 417 residues: NADH-quinone oxidoreductase subunit D (417 aa).

Belongs to the complex I 49 kDa subunit family. As to quaternary structure, NDH-1 is composed of 14 different subunits. Subunits NuoB, C, D, E, F, and G constitute the peripheral sector of the complex.

It localises to the cell inner membrane. The enzyme catalyses a quinone + NADH + 5 H(+)(in) = a quinol + NAD(+) + 4 H(+)(out). NDH-1 shuttles electrons from NADH, via FMN and iron-sulfur (Fe-S) centers, to quinones in the respiratory chain. The immediate electron acceptor for the enzyme in this species is believed to be ubiquinone. Couples the redox reaction to proton translocation (for every two electrons transferred, four hydrogen ions are translocated across the cytoplasmic membrane), and thus conserves the redox energy in a proton gradient. The chain is NADH-quinone oxidoreductase subunit D from Hydrogenovibrio crunogenus (strain DSM 25203 / XCL-2) (Thiomicrospira crunogena).